Reading from the N-terminus, the 364-residue chain is FK506-binding protein 4 (364 aa).

2 disordered regions span residues 92 to 148 (SMFG…DDEI) and 168 to 239 (EADK…PTKP). The segment covering 94–148 (FGDDEHGEDEDNEEEEGEEGEDEEMEGEDEDEDEEDEDEEDEDEEEEDDEEDDEI) has biased composition (acidic residues). Over residues 168 to 184 (EADKNKQQKKPKQEEPV) the composition is skewed to basic and acidic residues. Positions 185–239 (KQVTPVKPTAQAAKPTAATTTTTTTTTTTPTKQTTPAKPAAKPVTPTKPVTPTKP) are enriched in low complexity. The region spanning 277–363 (GKKVGVKYIG…IFDVELVSCA (87 aa)) is the PPIase FKBP-type domain.

It belongs to the FKBP-type PPIase family. In terms of assembly, binds to histones H3 and H4.

The protein resides in the nucleus. The enzyme catalyses [protein]-peptidylproline (omega=180) = [protein]-peptidylproline (omega=0). Its activity is regulated as follows. Inhibited by both FK506 and rapamycin. PPIase that acts as a histone chaperone. Histone proline isomerase that increases the rate of cis-trans isomerization at prolines on the histone H3 N-terminal tail. Proline isomerization influences H3 methylation thereby regulating gene expression. This Dictyostelium discoideum (Social amoeba) protein is FK506-binding protein 4 (fkbp4).